A 570-amino-acid chain; its full sequence is Probable electron transfer flavoprotein-ubiquinone oxidoreductase (570 aa).

13-27 (VVIVGAGPAGLSAAI) serves as a coordination point for FAD. Cys515, Cys539, Cys542, and Cys545 together coordinate [4Fe-4S] cluster. Residues 530–559 (KRFQINAANCVHCKTCDIKDPSQNITWVTP) form the 4Fe-4S ferredoxin-type domain.

[4Fe-4S] cluster serves as cofactor. FAD is required as a cofactor.

The enzyme catalyses a ubiquinone + reduced [electron-transfer flavoprotein] = a ubiquinol + oxidized [electron-transfer flavoprotein] + H(+). In terms of biological role, accepts electrons from ETF and reduces ubiquinone. The sequence is that of Probable electron transfer flavoprotein-ubiquinone oxidoreductase (etfD) from Acinetobacter baylyi (strain ATCC 33305 / BD413 / ADP1).